Consider the following 193-residue polypeptide: Holliday junction branch migration complex subunit RuvA (193 aa).

The segment at 1-64 is domain I; it reads MIGRIAGILL…EDAHLLYGFL (64 aa). Positions 65 to 139 are domain II; the sequence is TPQERTTFRE…GKLGADLGAL (75 aa). The segment at 139-143 is flexible linker; that stretch reads LAGAA. A domain III region spans residues 144–193; that stretch reads SQSDHATDILNALVALGYSEKEGLAAIKNVPAGTGVSEGIKLALKALSKV.

This sequence belongs to the RuvA family. As to quaternary structure, homotetramer. Forms an RuvA(8)-RuvB(12)-Holliday junction (HJ) complex. HJ DNA is sandwiched between 2 RuvA tetramers; dsDNA enters through RuvA and exits via RuvB. An RuvB hexamer assembles on each DNA strand where it exits the tetramer. Each RuvB hexamer is contacted by two RuvA subunits (via domain III) on 2 adjacent RuvB subunits; this complex drives branch migration. In the full resolvosome a probable DNA-RuvA(4)-RuvB(12)-RuvC(2) complex forms which resolves the HJ.

The protein resides in the cytoplasm. In terms of biological role, the RuvA-RuvB-RuvC complex processes Holliday junction (HJ) DNA during genetic recombination and DNA repair, while the RuvA-RuvB complex plays an important role in the rescue of blocked DNA replication forks via replication fork reversal (RFR). RuvA specifically binds to HJ cruciform DNA, conferring on it an open structure. The RuvB hexamer acts as an ATP-dependent pump, pulling dsDNA into and through the RuvAB complex. HJ branch migration allows RuvC to scan DNA until it finds its consensus sequence, where it cleaves and resolves the cruciform DNA. This Burkholderia ambifaria (strain MC40-6) protein is Holliday junction branch migration complex subunit RuvA.